A 134-amino-acid chain; its full sequence is Small ribosomal subunit protein uS9c (134 aa).

Belongs to the universal ribosomal protein uS9 family.

Its subcellular location is the plastid. It is found in the chloroplast. The protein is Small ribosomal subunit protein uS9c (rps9) of Thalassiosira pseudonana (Marine diatom).